A 682-amino-acid chain; its full sequence is DNA ligase (682 aa).

Residues 42-46 (DAEYD), 91-92 (SL), and glutamate 124 each bind NAD(+). The N6-AMP-lysine intermediate role is filled by lysine 126. 4 residues coordinate NAD(+): arginine 147, glutamate 184, lysine 302, and lysine 326. Positions 420, 423, 438, and 444 each coordinate Zn(2+). Residues 603-682 (IADNPLKGKS…QEFIALTGEN (80 aa)) form the BRCT domain.

Belongs to the NAD-dependent DNA ligase family. LigA subfamily. The cofactor is Mg(2+). Mn(2+) serves as cofactor.

The enzyme catalyses NAD(+) + (deoxyribonucleotide)n-3'-hydroxyl + 5'-phospho-(deoxyribonucleotide)m = (deoxyribonucleotide)n+m + AMP + beta-nicotinamide D-nucleotide.. In terms of biological role, DNA ligase that catalyzes the formation of phosphodiester linkages between 5'-phosphoryl and 3'-hydroxyl groups in double-stranded DNA using NAD as a coenzyme and as the energy source for the reaction. It is essential for DNA replication and repair of damaged DNA. In Actinobacillus pleuropneumoniae serotype 3 (strain JL03), this protein is DNA ligase.